The primary structure comprises 179 residues: tRNA (cytidine(56)-2'-O)-methyltransferase (179 aa).

Leu-84 contacts S-adenosyl-L-methionine.

Belongs to the aTrm56 family. Homodimer.

The protein resides in the cytoplasm. It catalyses the reaction cytidine(56) in tRNA + S-adenosyl-L-methionine = 2'-O-methylcytidine(56) in tRNA + S-adenosyl-L-homocysteine + H(+). Specifically catalyzes the AdoMet-dependent 2'-O-ribose methylation of cytidine at position 56 in tRNAs. In Methanothermobacter thermautotrophicus (strain ATCC 29096 / DSM 1053 / JCM 10044 / NBRC 100330 / Delta H) (Methanobacterium thermoautotrophicum), this protein is tRNA (cytidine(56)-2'-O)-methyltransferase.